The primary structure comprises 335 residues: Transaldolase (335 aa).

Ser-2 bears the N-acetylserine mark. Lys-144 (schiff-base intermediate with substrate) is an active-site residue.

Belongs to the transaldolase family. Type 1 subfamily. Homodimer.

It catalyses the reaction D-sedoheptulose 7-phosphate + D-glyceraldehyde 3-phosphate = D-erythrose 4-phosphate + beta-D-fructose 6-phosphate. The protein operates within carbohydrate degradation; pentose phosphate pathway; D-glyceraldehyde 3-phosphate and beta-D-fructose 6-phosphate from D-ribose 5-phosphate and D-xylulose 5-phosphate (non-oxidative stage): step 2/3. Functionally, transaldolase is important for the balance of metabolites in the pentose-phosphate pathway. This is Transaldolase (TAL1) from Saccharomyces cerevisiae (strain ATCC 204508 / S288c) (Baker's yeast).